Here is a 252-residue protein sequence, read N- to C-terminus: Hydroxyacylglutathione hydrolase (252 aa).

7 residues coordinate Zn(2+): H54, H56, D58, H59, H113, D132, and H170.

It belongs to the metallo-beta-lactamase superfamily. Glyoxalase II family. Monomer. Zn(2+) is required as a cofactor.

It catalyses the reaction an S-(2-hydroxyacyl)glutathione + H2O = a 2-hydroxy carboxylate + glutathione + H(+). It functions in the pathway secondary metabolite metabolism; methylglyoxal degradation; (R)-lactate from methylglyoxal: step 2/2. Its function is as follows. Thiolesterase that catalyzes the hydrolysis of S-D-lactoyl-glutathione to form glutathione and D-lactic acid. The chain is Hydroxyacylglutathione hydrolase from Gloeobacter violaceus (strain ATCC 29082 / PCC 7421).